Here is a 1334-residue protein sequence, read N- to C-terminus: Aldehyde oxidase 3 (1334 aa).

A 2Fe-2S ferredoxin-type domain is found at 8 to 95; it reads DELIFFVNGK…GAAVTTVEGI (88 aa). [2Fe-2S] cluster contacts are provided by C47, C52, C55, and C77. Q116 provides a ligand contact to Mo-molybdopterin. [2Fe-2S] cluster contacts are provided by C117, C120, C152, and C154. One can recognise an FAD-binding PCMH-type domain in the interval 236–421; that stretch reads FRGERTTWIA…ISVFVPLSRK (186 aa). 264–271 contributes to the FAD binding site; that stretch reads LVIGNTCL. S320 carries the post-translational modification Phosphoserine. Positions 354, 358, 367, and 411 each coordinate FAD. The Mo-molybdopterin site is built by G801, L1042, and Q1198. The Proton acceptor; for azaheterocycle hydroxylase activity role is filled by E1265.

The protein belongs to the xanthine dehydrogenase family. As to quaternary structure, homodimer. It depends on [2Fe-2S] cluster as a cofactor. Requires FAD as cofactor. Mo-molybdopterin is required as a cofactor.

The protein localises to the cytoplasm. The enzyme catalyses an aldehyde + O2 + H2O = a carboxylate + H2O2 + H(+). In terms of biological role, oxidase with broad substrate specificity, oxidizing aromatic azaheterocycles, such as N1-methylnicotinamide and phthalazine, as well as aldehydes, such as benzaldehyde, retinal and pyridoxal. Plays a key role in the metabolism of xenobiotics and drugs containing aromatic azaheterocyclic substituents. Is probably involved in the regulation of reactive oxygen species homeostasis. Is a prominent source of superoxide generation via the one-electron reduction of molecular oxygen. Also catalyzes nitric oxide (NO) production; under anaerobic conditions, reduces nitrite to NO with NADH or aldehyde as electron donor, but under aerobic conditions, NADH is the preferred substrate. These reactions may be catalyzed by several isozymes. This Rattus norvegicus (Rat) protein is Aldehyde oxidase 3 (Aox3).